The primary structure comprises 76 residues: Demidefensin-3 (76 aa).

The first 22 residues, 1-22, serve as a signal peptide directing secretion; sequence MRTLALHTAMLLLVALHAQAEA. A propeptide spanning residues 23 to 64 is cleaved from the precursor; that stretch reads RQARADEAAAQQQPGADDQGMAHSFTWPENAALPLSESERGL. Residues 25-45 form a disordered region; sequence ARADEAAAQQQPGADDQGMAH. A compositionally biased stretch (low complexity) spans 30 to 44; the sequence is AAAQQQPGADDQGMA. A disulfide bond links Cys68 and Cys73. The propeptide occupies 74-76; the sequence is RLL.

The protein belongs to the alpha-defensin family. Theta subfamily. In terms of assembly, forms a cyclic homodimer; disulfide-linked. This is a cyclic peptide.

Functionally, has antimicrobial activities against bacteria and fungi. This chain is Demidefensin-3, found in Macaca mulatta (Rhesus macaque).